The primary structure comprises 153 residues: Ribosome maturation factor RimP (153 aa).

Belongs to the RimP family.

Its subcellular location is the cytoplasm. In terms of biological role, required for maturation of 30S ribosomal subunits. The polypeptide is Ribosome maturation factor RimP (Glaesserella parasuis serovar 5 (strain SH0165) (Haemophilus parasuis)).